The sequence spans 307 residues: Alpha N-terminal protein methyltransferase 1 (307 aa).

Over residues 38–51 (EPAPAPAAGSNGVA) the composition is skewed to low complexity. The interval 38–60 (EPAPAPAAGSNGVAGEEEAGGGG) is disordered. S-adenosyl-L-methionine-binding positions include Gly-123, Arg-128, 145-147 (EPV), 179-180 (LQ), and Gln-195.

This sequence belongs to the methyltransferase superfamily. NTM1 family.

The catalysed reaction is N-terminal L-alanyl-L-prolyl-L-lysyl-[protein] + 3 S-adenosyl-L-methionine = N-terminal N,N,N-trimethyl-L-alanyl-L-prolyl-L-lysyl-[protein] + 3 S-adenosyl-L-homocysteine + 3 H(+). It carries out the reaction N-terminal L-seryl-L-prolyl-L-lysyl-[protein] + 3 S-adenosyl-L-methionine = N-terminal N,N,N-trimethyl-L-seryl-L-prolyl-L-lysyl-[protein] + 3 S-adenosyl-L-homocysteine + 3 H(+). It catalyses the reaction N-terminal L-prolyl-L-prolyl-L-lysyl-[protein] + 2 S-adenosyl-L-methionine = N-terminal N,N-dimethyl-L-prolyl-L-prolyl-L-lysyl-[protein] + 2 S-adenosyl-L-homocysteine + 2 H(+). In terms of biological role, alpha-N-methyltransferase that methylates the N-terminus of target proteins containing the N-terminal motif [Ala/Pro/Ser]-Pro-Lys when the initiator Met is cleaved. Specifically catalyzes mono-, di- or tri-methylation of exposed alpha-amino group of Ala or Ser residue in the [Ala/Ser]-Pro-Lys motif and mono- or di-methylation of Pro in the Pro-Pro-Lys motif. This is Alpha N-terminal protein methyltransferase 1 from Oryza sativa subsp. japonica (Rice).